Here is an 87-residue protein sequence, read N- to C-terminus: MNKKNDINRKIFCNFFKKYEEGLTYIPYPGLLGHKIYNEISKLAWNKWILQQTIIINEKKMNMLNKNDQKKIENYMIKFLFKNKQQL.

It belongs to the Fe(2+)-trafficking protein family. In terms of assembly, monomer.

Functionally, could be a mediator in iron transactions between iron acquisition and iron-requiring processes, such as synthesis and/or repair of Fe-S clusters in biosynthetic enzymes. In Buchnera aphidicola subsp. Baizongia pistaciae (strain Bp), this protein is Probable Fe(2+)-trafficking protein.